An 837-amino-acid polypeptide reads, in one-letter code: Mannosyl-oligosaccharide glucosidase (837 aa).

Residues 1–10 are compositionally biased toward basic residues; sequence MARGERRRRA. At 1–38 the chain is on the cytoplasmic side; the sequence is MARGERRRRAVPAEGVRTAERAARGGPGRRDGRGGGPR. The disordered stretch occupies residues 1–39; that stretch reads MARGERRRRAVPAEGVRTAERAARGGPGRRDGRGGGPRS. Residues 3 to 9 carry the Endoplasmic reticulum targeting motif; that stretch reads RGERRRR. Residues 17–33 are compositionally biased toward basic and acidic residues; that stretch reads RTAERAARGGPGRRDGR. Residues 39 to 59 traverse the membrane as a helical; Signal-anchor for type II membrane protein segment; the sequence is STAGGVALAVVVLSLALGMSG. Residues 60–837 lie on the Lumenal side of the membrane; the sequence is RWVLAWYRAR…LVLLAMAEDY (778 aa). The segment at 76–137 is required for endoplasmic reticulum targeting; the sequence is SAPPVLPADS…PGTPKLRHTC (62 aa). The active-site Proton donor is the Asp583. Asn657 carries an N-linked (GlcNAc...) asparagine glycan. Catalysis depends on Glu807, which acts as the Proton acceptor.

The protein belongs to the glycosyl hydrolase 63 family.

It is found in the endoplasmic reticulum membrane. It carries out the reaction N(4)-(alpha-D-Glc-(1-&gt;2)-alpha-D-Glc-(1-&gt;3)-alpha-D-Glc-(1-&gt;3)-alpha-D-Man-(1-&gt;2)-alpha-D-Man-(1-&gt;2)-alpha-D-Man-(1-&gt;3)-[alpha-D-Man-(1-&gt;2)-alpha-D-Man-(1-&gt;3)-[alpha-D-Man-(1-&gt;2)-alpha-D-Man-(1-&gt;6)]-alpha-D-Man-(1-&gt;6)]-beta-D-Man-(1-&gt;4)-beta-D-GlcNAc-(1-&gt;4)-beta-D-GlcNAc)-L-asparaginyl-[protein] + H2O = N(4)-(alpha-D-Glc-(1-&gt;3)-alpha-D-Glc-(1-&gt;3)-alpha-D-Man-(1-&gt;2)-alpha-D-Man-(1-&gt;2)-alpha-D-Man-(1-&gt;3)-[alpha-D-Man-(1-&gt;2)-alpha-D-Man-(1-&gt;3)-[alpha-D-Man-(1-&gt;2)-alpha-D-Man-(1-&gt;6)]-alpha-D-Man-(1-&gt;6)]-beta-D-Man-(1-&gt;4)-beta-D-GlcNAc-(1-&gt;4)-beta-D-GlcNAc)-L-asparaginyl-[protein] + beta-D-glucose. It participates in glycan metabolism; N-glycan degradation. Inhibited by 1-deoxynojirimycin (40% inhibition) and N,N-dimethyl-deoxynojirimycin (85% inhibition). Its function is as follows. In the context of N-glycan degradation, cleaves the distal alpha 1,2-linked glucose residue from the Glc(3)Man(9)GlcNAc(2) oligosaccharide precursor in a highly specific manner. In Homo sapiens (Human), this protein is Mannosyl-oligosaccharide glucosidase.